The sequence spans 176 residues: 3-hydroxydecanoyl-[acyl-carrier-protein] dehydratase (176 aa).

His-75 is a catalytic residue.

This sequence belongs to the thioester dehydratase family. FabA subfamily. In terms of assembly, homodimer.

It is found in the cytoplasm. The enzyme catalyses a (3R)-hydroxyacyl-[ACP] = a (2E)-enoyl-[ACP] + H2O. The catalysed reaction is (3R)-hydroxydecanoyl-[ACP] = (2E)-decenoyl-[ACP] + H2O. It catalyses the reaction (2E)-decenoyl-[ACP] = (3Z)-decenoyl-[ACP]. The protein operates within lipid metabolism; fatty acid biosynthesis. Functionally, necessary for the introduction of cis unsaturation into fatty acids. Catalyzes the dehydration of (3R)-3-hydroxydecanoyl-ACP to E-(2)-decenoyl-ACP and then its isomerization to Z-(3)-decenoyl-ACP. Can catalyze the dehydratase reaction for beta-hydroxyacyl-ACPs with saturated chain lengths up to 16:0, being most active on intermediate chain length. The polypeptide is 3-hydroxydecanoyl-[acyl-carrier-protein] dehydratase (Actinobacillus pleuropneumoniae serotype 5b (strain L20)).